The following is a 365-amino-acid chain: Heterogeneous nuclear ribonucleoproteins A1 homolog (365 aa).

The globular A domain stretch occupies residues 4–94 (SEAPNEPEQL…EPKRAVSRED (91 aa)). RRM domains are found at residues 14–97 (RKLF…DSSR) and 105–184 (KKIF…LSKQ). A globular B domain region spans residues 95–185 (SSRPGAHLTV…QVRKALSKQE (91 aa)). Disordered regions lie at residues 175–208 (SQVRKALSKQEMASVSGSQRERGGSGNYGSRGGF) and 328–365 (GPMKGGNYGGGRNSGPYGGGYGGGSASSSSGYGGGRRF). 2 stretches are compositionally biased toward gly residues: residues 198-208 (GSGNYGSRGGF) and 330-365 (MKGGNYGGGRNSGPYGGGYGGGSASSSSGYGGGRRF). Positions 321-359 (SQSSSNFGPMKGGNYGGGRNSGPYGGGYGGGSASSSSGY) are nuclear targeting sequence.

Its subcellular location is the nucleus. The protein resides in the cytoplasm. In terms of biological role, this protein is a component of ribonucleosomes. This Xenopus laevis (African clawed frog) protein is Heterogeneous nuclear ribonucleoproteins A1 homolog (hnrnpa1).